Here is a 577-residue protein sequence, read N- to C-terminus: Proline--tRNA ligase (577 aa).

Belongs to the class-II aminoacyl-tRNA synthetase family. ProS type 1 subfamily. In terms of assembly, homodimer.

It is found in the cytoplasm. It catalyses the reaction tRNA(Pro) + L-proline + ATP = L-prolyl-tRNA(Pro) + AMP + diphosphate. In terms of biological role, catalyzes the attachment of proline to tRNA(Pro) in a two-step reaction: proline is first activated by ATP to form Pro-AMP and then transferred to the acceptor end of tRNA(Pro). As ProRS can inadvertently accommodate and process non-cognate amino acids such as alanine and cysteine, to avoid such errors it has two additional distinct editing activities against alanine. One activity is designated as 'pretransfer' editing and involves the tRNA(Pro)-independent hydrolysis of activated Ala-AMP. The other activity is designated 'posttransfer' editing and involves deacylation of mischarged Ala-tRNA(Pro). The misacylated Cys-tRNA(Pro) is not edited by ProRS. This chain is Proline--tRNA ligase, found in Helicobacter pylori (strain Shi470).